The chain runs to 471 residues: ATP synthase subunit beta (471 aa).

156–163 (GGAGVGKT) contributes to the ATP binding site.

This sequence belongs to the ATPase alpha/beta chains family. In terms of assembly, F-type ATPases have 2 components, CF(1) - the catalytic core - and CF(0) - the membrane proton channel. CF(1) has five subunits: alpha(3), beta(3), gamma(1), delta(1), epsilon(1). CF(0) has three main subunits: a(1), b(2) and c(9-12). The alpha and beta chains form an alternating ring which encloses part of the gamma chain. CF(1) is attached to CF(0) by a central stalk formed by the gamma and epsilon chains, while a peripheral stalk is formed by the delta and b chains.

It localises to the cell membrane. It carries out the reaction ATP + H2O + 4 H(+)(in) = ADP + phosphate + 5 H(+)(out). Its function is as follows. Produces ATP from ADP in the presence of a proton gradient across the membrane. The catalytic sites are hosted primarily by the beta subunits. This Lysinibacillus sphaericus (strain C3-41) protein is ATP synthase subunit beta.